The primary structure comprises 1394 residues: DNA-directed RNA polymerase subunit beta'' (1394 aa).

Zn(2+)-binding residues include Cys224, Cys295, Cys302, and Cys305.

This sequence belongs to the RNA polymerase beta' chain family. RpoC2 subfamily. In terms of assembly, in plastids the minimal PEP RNA polymerase catalytic core is composed of four subunits: alpha, beta, beta', and beta''. When a (nuclear-encoded) sigma factor is associated with the core the holoenzyme is formed, which can initiate transcription. The cofactor is Zn(2+).

The protein localises to the plastid. It localises to the chloroplast. The enzyme catalyses RNA(n) + a ribonucleoside 5'-triphosphate = RNA(n+1) + diphosphate. Its function is as follows. DNA-dependent RNA polymerase catalyzes the transcription of DNA into RNA using the four ribonucleoside triphosphates as substrates. In Vitis vinifera (Grape), this protein is DNA-directed RNA polymerase subunit beta''.